A 273-amino-acid polypeptide reads, in one-letter code: Ribosomal RNA small subunit methyltransferase A (273 aa).

Asn-18, Leu-20, Gly-45, Glu-66, Asp-91, and Asn-113 together coordinate S-adenosyl-L-methionine.

It belongs to the class I-like SAM-binding methyltransferase superfamily. rRNA adenine N(6)-methyltransferase family. RsmA subfamily.

It localises to the cytoplasm. The enzyme catalyses adenosine(1518)/adenosine(1519) in 16S rRNA + 4 S-adenosyl-L-methionine = N(6)-dimethyladenosine(1518)/N(6)-dimethyladenosine(1519) in 16S rRNA + 4 S-adenosyl-L-homocysteine + 4 H(+). Functionally, specifically dimethylates two adjacent adenosines (A1518 and A1519) in the loop of a conserved hairpin near the 3'-end of 16S rRNA in the 30S particle. May play a critical role in biogenesis of 30S subunits. The sequence is that of Ribosomal RNA small subunit methyltransferase A from Cronobacter sakazakii (strain ATCC BAA-894) (Enterobacter sakazakii).